Consider the following 93-residue polypeptide: DNA/RNA-binding protein Alba (93 aa).

N6-acetyllysine is present on Lys11.

This sequence belongs to the histone-like Alba family. Acetylated. Acetylation at Lys-11 decreases DNA-binding affinity.

The protein localises to the cytoplasm. It localises to the chromosome. Functionally, binds double-stranded DNA tightly but without sequence specificity. Involved in DNA compaction. The sequence is that of DNA/RNA-binding protein Alba from Pyrococcus horikoshii (strain ATCC 700860 / DSM 12428 / JCM 9974 / NBRC 100139 / OT-3).